The chain runs to 168 residues: MSLPNPAELISQMAIRLKAHLEHRGISDPRYIGIRTGGVWVAQALLEALGSQSPLGTLDVSFYRDDFSQNGLHPQVRPSALPFEIEGQHLVLIDDVLMSGRTIRAAMNELFDYGRPASVTLVCLLDLDAAELPIRPNVVGATLTLAAHERVKLSGPSPLQLELQDLAL.

Substrate contacts are provided by residues 36–37, R77, 94–102, and V151; these read TG and DDVLMSGRT. The PRPP-binding signature appears at 90 to 102; it reads LVLIDDVLMSGRT.

The protein belongs to the purine/pyrimidine phosphoribosyltransferase family. PyrR subfamily.

It carries out the reaction UMP + diphosphate = 5-phospho-alpha-D-ribose 1-diphosphate + uracil. Its function is as follows. Regulates the transcription of the pyrimidine nucleotide (pyr) operon in response to exogenous pyrimidines. In terms of biological role, also displays a weak uracil phosphoribosyltransferase activity which is not physiologically significant. The sequence is that of Bifunctional protein PyrR from Pseudomonas fluorescens.